We begin with the raw amino-acid sequence, 291 residues long: MAKGRVAERSQLGAHHTTPVGDGAAGTRGLAAPGSRDHQKEKSWVEAGSARMSLLILVSIFLSAAFVMFLVYKNFPQLSEEERVNMKVPRDMDDAKALGKVLSKYKDTFYVQVLVAYFATYIFLQTFAIPGSIFLSILSGFLYPFPLALFLVCLCSGLGASFCYMLSYLVGRPVVYKYLTEKAVKWSQQVERHREHLINYIIFLRITPFLPNWFINITSPVINVPLKVFFIGTFLGVAPPSFVAIKAGTTLYQLTTAGEAVSWNSIFILMILAVLSILPAIFQKKLKQKFE.

The segment at 1–39 is disordered; sequence MAKGRVAERSQLGAHHTTPVGDGAAGTRGLAAPGSRDHQ. Position 18 is a phosphothreonine (Thr-18). Ser-35 bears the Phosphoserine mark. Helical transmembrane passes span 52 to 72, 109 to 129, 147 to 169, 197 to 217, 225 to 245, and 262 to 282; these read MSLL…FLVY, FYVQ…TFAI, LALF…LSYL, LINY…FINI, PLKV…FVAI, and SWNS…PAIF. The VTT domain; required for its function in autophagy stretch occupies residues 140-251; it reads GFLYPFPLAL…FVAIKAGTTL (112 aa).

The protein belongs to the TMEM41 family. As to quaternary structure, interacts with VMP1. Interacts with COPA, COPB1, VDAC1 and ERLIN2. Interacts with ATG2A. Interacts with SURF4. In terms of assembly, (Microbial infection) Interacts with Zika virus NS4A protein and Yellow fever virus NS4B protein.

Its subcellular location is the endoplasmic reticulum membrane. It localises to the endomembrane system. The protein resides in the cytoplasm. It catalyses the reaction a 1,2-diacyl-sn-glycero-3-phospho-L-serine(in) = a 1,2-diacyl-sn-glycero-3-phospho-L-serine(out). The enzyme catalyses cholesterol(in) = cholesterol(out). It carries out the reaction a 1,2-diacyl-sn-glycero-3-phosphocholine(in) = a 1,2-diacyl-sn-glycero-3-phosphocholine(out). The catalysed reaction is a 1,2-diacyl-sn-glycero-3-phosphoethanolamine(in) = a 1,2-diacyl-sn-glycero-3-phosphoethanolamine(out). In terms of biological role, phospholipid scramblase involved in lipid homeostasis and membrane dynamics processes. Has phospholipid scramblase activity toward cholesterol and phosphatidylserine, as well as phosphatidylethanolamine and phosphatidylcholine. Required for autophagosome formation: participates in early stages of autophagosome biogenesis at the endoplasmic reticulum (ER) membrane by reequilibrating the leaflets of the ER as lipids are extracted by ATG2 (ATG2A or ATG2B) to mediate autophagosome assembly. In addition to autophagy, involved in other processes in which phospholipid scramblase activity is required. Required for normal motor neuron development. (Microbial infection) Critical host factor required for infection by human coronaviruses SARS-CoV-2, HCoV-OC43, HCoV-NL63, and HCoV-229E, as well as all flaviviruses tested such as Zika virus and Yellow fever virus. Required post-entry of the virus to facilitate the ER membrane remodeling necessary to form replication organelles. The protein is Transmembrane protein 41B of Homo sapiens (Human).